We begin with the raw amino-acid sequence, 83 residues long: Short neurotoxin OKI-Ed (83 aa).

The first 21 residues, 1–21 (MKTLLLTLVVVTIVCLDLGYT), serve as a signal peptide directing secretion. Disulfide bonds link Cys24-Cys45, Cys38-Cys62, Cys64-Cys75, and Cys76-Cys81.

It belongs to the three-finger toxin family. Short-chain subfamily. Type I alpha-neurotoxin sub-subfamily. As to expression, expressed by the venom gland.

It is found in the secreted. In terms of biological role, binds to muscle nicotinic acetylcholine receptor (nAChR) and inhibit acetylcholine from binding to the receptor, thereby impairing neuromuscular transmission. The polypeptide is Short neurotoxin OKI-Ed (Laticauda semifasciata (Black-banded sea krait)).